Reading from the N-terminus, the 251-residue chain is Cell division protein ZapD (251 aa).

It belongs to the ZapD family. As to quaternary structure, interacts with FtsZ.

Its subcellular location is the cytoplasm. Cell division factor that enhances FtsZ-ring assembly. Directly interacts with FtsZ and promotes bundling of FtsZ protofilaments, with a reduction in FtsZ GTPase activity. This Janthinobacterium sp. (strain Marseille) (Minibacterium massiliensis) protein is Cell division protein ZapD.